The sequence spans 161 residues: Urease accessory protein UreE (161 aa).

The protein belongs to the UreE family. Homodimer.

The protein localises to the cytoplasm. In terms of biological role, involved in urease metallocenter assembly. Binds nickel. Probably functions as a nickel donor during metallocenter assembly. It is not essential for urease activity. This is Urease accessory protein UreE from Proteus mirabilis (strain HI4320).